The sequence spans 225 residues: Ribonuclease 3 (225 aa).

The region spanning 5–127 (IDKLERKLGY…IIGAIYLDSD (123 aa)) is the RNase III domain. Position 40 (Glu40) interacts with Mg(2+). Asp44 is an active-site residue. 2 residues coordinate Mg(2+): Asp113 and Glu116. Glu116 is an active-site residue. In terms of domain architecture, DRBM spans 154 to 224 (DPKTRLQEFL…AETALEQLTN (71 aa)).

This sequence belongs to the ribonuclease III family. As to quaternary structure, homodimer. Mg(2+) is required as a cofactor.

It is found in the cytoplasm. It carries out the reaction Endonucleolytic cleavage to 5'-phosphomonoester.. Digests double-stranded RNA. Involved in the processing of primary rRNA transcript to yield the immediate precursors to the large and small rRNAs (23S and 16S). Processes some mRNAs, and tRNAs when they are encoded in the rRNA operon. Processes pre-crRNA and tracrRNA of type II CRISPR loci if present in the organism. This chain is Ribonuclease 3, found in Vibrio campbellii (strain ATCC BAA-1116).